Here is a 216-residue protein sequence, read N- to C-terminus: 3-isopropylmalate dehydratase small subunit (216 aa).

The protein belongs to the LeuD family. LeuD type 1 subfamily. As to quaternary structure, heterodimer of LeuC and LeuD.

It catalyses the reaction (2R,3S)-3-isopropylmalate = (2S)-2-isopropylmalate. It participates in amino-acid biosynthesis; L-leucine biosynthesis; L-leucine from 3-methyl-2-oxobutanoate: step 2/4. Its function is as follows. Catalyzes the isomerization between 2-isopropylmalate and 3-isopropylmalate, via the formation of 2-isopropylmaleate. The polypeptide is 3-isopropylmalate dehydratase small subunit (Acidovorax ebreus (strain TPSY) (Diaphorobacter sp. (strain TPSY))).